A 177-amino-acid polypeptide reads, in one-letter code: Large ribosomal subunit protein uL6 (177 aa).

The protein belongs to the universal ribosomal protein uL6 family. In terms of assembly, part of the 50S ribosomal subunit.

This protein binds to the 23S rRNA, and is important in its secondary structure. It is located near the subunit interface in the base of the L7/L12 stalk, and near the tRNA binding site of the peptidyltransferase center. In Azoarcus sp. (strain BH72), this protein is Large ribosomal subunit protein uL6.